The chain runs to 337 residues: Inositol 2-dehydrogenase (337 aa).

This sequence belongs to the Gfo/Idh/MocA family. In terms of assembly, homotetramer.

The catalysed reaction is myo-inositol + NAD(+) = scyllo-inosose + NADH + H(+). Involved in the oxidation of myo-inositol (MI) to 2-keto-myo-inositol (2KMI or 2-inosose). The protein is Inositol 2-dehydrogenase of Gluconacetobacter diazotrophicus (strain ATCC 49037 / DSM 5601 / CCUG 37298 / CIP 103539 / LMG 7603 / PAl5).